A 91-amino-acid polypeptide reads, in one-letter code: Small ribosomal subunit protein bS16 (91 aa).

The protein belongs to the bacterial ribosomal protein bS16 family.

The chain is Small ribosomal subunit protein bS16 from Lacticaseibacillus casei (strain BL23) (Lactobacillus casei).